A 258-amino-acid polypeptide reads, in one-letter code: Oxidoreductase fscI (258 aa).

5 residues coordinate NADP(+): L34, R59, D82, N109, and K141. Catalysis depends on S163, which acts as the Proton donor. NADP(+) is bound at residue R193.

It belongs to the short-chain dehydrogenases/reductases (SDR) family.

It functions in the pathway secondary metabolite biosynthesis. Functionally, oxidoreductase; part of the fragmented gene cluster that mediates the biosynthesis of fusarochromene, a tryptophan-derived metabolite closely related to a group of mycotoxins including fusarochromanone. Within the pathway, fscI catalyzes the formation of the chromene ring from the prenyl moity added by the prenyltransferase fscG. The first step of the pathway is the epimerization of L-tryptophan to D-tryptophan in the presence of the NRPS-like tryptophan epimerase fscC. D-tryptophan is subsequently hydroxylated by the tryptophan 6-hydroxylase fscE to yield 6-hydroxytryptophan. The pyrrole ring undergoes cleavaged by the tryptophan 2,3-dioxygenase fscD and is finally converted to 4-hydroxykyrunenine by the hydrolase fscH. The NRPS-like oxidoreductase fscA reduces the carboxyl group to primary alcohol and the DMATS-type prenyltransferase fscG performs prenylation, followed by the formation of a chromene ring catalyzed by the oxidoreductase fscI, which leads to desacetylfusarochromene. Epoxidation by fscF and rearrangement reactions of chromene double bonds convert compound desacetylfusarochromene to fusarochromanones. Although specific acetyltransferases were not found near the fsc gene cluster, several predicted enzymes containing the N-acetyltransferase superfamily domain are present in the genome of F.equiseti. These predicted enzymes may have the potential to convert desacetylfusarochromene to fusarochromene. This Fusarium equiseti (Fusarium scirpi) protein is Oxidoreductase fscI.